We begin with the raw amino-acid sequence, 452 residues long: Alkane uptake protein A (452 aa).

An N-terminal signal peptide occupies residues 1–36 (MSERSVYMVLSPRFSVRAVSLAVAAVSASLSMPTSA).

Belongs to the OmpP1/FadL family. Interacts with the inner membrane protein AupB.

It is found in the cell outer membrane. Required for growth on alkanes. Probably involved in the uptake of micelle-solubilized alkanes. This is Alkane uptake protein A from Marinobacter nauticus (strain ATCC 49840 / DSM 8798 / CIP 103578 / SP17) (Marinobacter hydrocarbonoclasticus).